A 98-amino-acid polypeptide reads, in one-letter code: NADH-ubiquinone oxidoreductase chain 4L (98 aa).

The next 3 helical transmembrane spans lie at 1–21 (MSLV…GLLM), 29–49 (SLLC…IMVL), and 61–81 (IILL…LVMV).

The protein belongs to the complex I subunit 4L family. Core subunit of respiratory chain NADH dehydrogenase (Complex I) which is composed of 45 different subunits.

It localises to the mitochondrion inner membrane. It carries out the reaction a ubiquinone + NADH + 5 H(+)(in) = a ubiquinol + NAD(+) + 4 H(+)(out). Core subunit of the mitochondrial membrane respiratory chain NADH dehydrogenase (Complex I) which catalyzes electron transfer from NADH through the respiratory chain, using ubiquinone as an electron acceptor. Part of the enzyme membrane arm which is embedded in the lipid bilayer and involved in proton translocation. The protein is NADH-ubiquinone oxidoreductase chain 4L (MT-ND4L) of Pseudosoriculus fumidus (Taiwanese brown-toothed shrew).